Here is a 182-residue protein sequence, read N- to C-terminus: Adenine phosphoribosyltransferase 4 (182 aa).

It belongs to the purine/pyrimidine phosphoribosyltransferase family. As to quaternary structure, homodimer.

The protein resides in the cytoplasm. It catalyses the reaction AMP + diphosphate = 5-phospho-alpha-D-ribose 1-diphosphate + adenine. The protein operates within purine metabolism; AMP biosynthesis via salvage pathway; AMP from adenine: step 1/1. In terms of biological role, catalyzes a salvage reaction resulting in the formation of AMP, that is energically less costly than de novo synthesis. May contribute to the recycling of adenine into adenylate nucleotides and the inactivation of cytokinins by phosphoribosylation. Possesses low activity toward adenine, but can efficiently convert cytokinins from free bases (active form) to the corresponding nucleotides (inactive form). This is Adenine phosphoribosyltransferase 4 (APT4) from Arabidopsis thaliana (Mouse-ear cress).